Here is a 98-residue protein sequence, read N- to C-terminus: Co-chaperonin GroES (98 aa).

It belongs to the GroES chaperonin family. Heptamer of 7 subunits arranged in a ring. Interacts with the chaperonin GroEL.

The protein localises to the cytoplasm. Its function is as follows. Together with the chaperonin GroEL, plays an essential role in assisting protein folding. The GroEL-GroES system forms a nano-cage that allows encapsulation of the non-native substrate proteins and provides a physical environment optimized to promote and accelerate protein folding. GroES binds to the apical surface of the GroEL ring, thereby capping the opening of the GroEL channel. The polypeptide is Co-chaperonin GroES (Bartonella bacilliformis (strain ATCC 35685 / KC583 / Herrer 020/F12,63)).